Here is a 174-residue protein sequence, read N- to C-terminus: CASP-like protein 1 (174 aa).

Residues methionine 1–threonine 25 are disordered. Residues methionine 1–glycine 46 are Cytoplasmic-facing. A compositionally biased stretch (polar residues) spans serine 8–asparagine 18. The chain crosses the membrane as a helical span at residues valine 47 to alanine 67. Over threonine 68–threonine 96 the chain is Extracellular. A helical transmembrane segment spans residues phenylalanine 97–isoleucine 117. At alanine 118–threonine 119 the chain is on the cytoplasmic side. The helical transmembrane segment at isoleucine 120–phenylalanine 139 threads the bilayer. At asparagine 140–valine 150 the chain is on the extracellular side. A helical transmembrane segment spans residues valine 151–isoleucine 171. The Cytoplasmic portion of the chain corresponds to arginine 172–histidine 174.

It belongs to the Casparian strip membrane proteins (CASP) family. Homodimer and heterodimers.

The protein resides in the cell membrane. The polypeptide is CASP-like protein 1 (Triphysaria pusilla (Dwarf owl's-clover)).